The sequence spans 493 residues: Tripartite motif-containing protein 5 (493 aa).

Residue Ala-2 is modified to N-acetylalanine. The RING-type zinc-finger motif lies at 15–59; sequence CPICLELLTQPLSLDCGHSFCQACLTANHKKSMLDKGESSCPVCR. Position 86 is a phosphoserine (Ser-86). The B box-type zinc finger occupies 90–132; that stretch reads QKVDHCAHHGEKLLLFCQEDGKVICWLCERSQEHRGHHTFLTE. Residues Cys-95, His-98, Cys-117, and His-123 each contribute to the Zn(2+) site. A coiled-coil region spans residues 131–240; sequence TEEVAREYQV…LISDLERRLQ (110 aa). Residues 185–198 form a required for interaction with GABARAP and for autophagy region; sequence FEQLRDILDWEESN. The B30.2/SPRY domain occupies 281 to 493; sequence LKGMLEVFRE…VPMTLCSPSS (213 aa).

This sequence belongs to the TRIM/RBCC family. In terms of assembly, can form homodimers and homotrimers. In addition to lower-order dimerization, also exhibits a higher-order multimerization and both low- and high-order multimerizations are essential for its restriction activity. Interacts with BTBD1 and BTBD2. Interacts with PSMC4, PSMC5, PSMD7 and HSPA8/HSC70. Interacts (via B30.2/SPRY domain) with HSPA1A/B. Interacts with PSMC2, MAP3K7/TAK1, TAB2 and TAB3. Interacts with SQSTM1. Interacts with TRIM6 and TRIM34. Interacts with ULK1 (phosphorylated form), GABARAP, GABARAPL1, GABARAPL2, MAP1LC3A, MAP1LC3C and BECN1. In terms of processing, degraded in a proteasome-independent fashion in the absence of viral infection but in a proteasome-dependent fashion following exposure to restriction sensitive virus. Post-translationally, autoubiquitinated in a RING finger- and UBE2D2-dependent manner. Monoubiquitinated by TRIM21. Deubiquitinated by Yersinia YopJ. Ubiquitination may not lead to proteasomal degradation.

The protein localises to the cytoplasm. The protein resides in the nucleus. The catalysed reaction is S-ubiquitinyl-[E2 ubiquitin-conjugating enzyme]-L-cysteine + [acceptor protein]-L-lysine = [E2 ubiquitin-conjugating enzyme]-L-cysteine + N(6)-ubiquitinyl-[acceptor protein]-L-lysine.. It functions in the pathway protein modification; protein ubiquitination. Functionally, capsid-specific restriction factor that prevents infection from non-host-adapted retroviruses. Blocks viral replication early in the life cycle, after viral entry but before reverse transcription. In addition to acting as a capsid-specific restriction factor, also acts as a pattern recognition receptor that activates innate immune signaling in response to the retroviral capsid lattice. Binding to the viral capsid triggers its E3 ubiquitin ligase activity, and in concert with the heterodimeric ubiquitin conjugating enzyme complex UBE2V1-UBE2N (also known as UBC13-UEV1A complex) generates 'Lys-63'-linked polyubiquitin chains, which in turn are catalysts in the autophosphorylation of the MAP3K7/TAK1 complex (includes TAK1, TAB2, and TAB3). Activation of the MAP3K7/TAK1 complex by autophosphorylation results in the induction and expression of NF-kappa-B and MAPK-responsive inflammatory genes, thereby leading to an innate immune response in the infected cell. Plays a role in regulating autophagy through activation of autophagy regulator BECN1 by causing its dissociation from its inhibitors BCL2 and TAB2. The protein is Tripartite motif-containing protein 5 (TRIM5) of Pan troglodytes (Chimpanzee).